Here is a 96-residue protein sequence, read N- to C-terminus: Small ribosomal subunit protein bS6 (96 aa).

The protein belongs to the bacterial ribosomal protein bS6 family.

Functionally, binds together with bS18 to 16S ribosomal RNA. The chain is Small ribosomal subunit protein bS6 (rpsF) from Mycobacterium bovis (strain ATCC BAA-935 / AF2122/97).